Consider the following 70-residue polypeptide: DNA-directed RNA polymerase subunit omega (70 aa).

It belongs to the RNA polymerase subunit omega family. The RNAP catalytic core consists of 2 alpha, 1 beta, 1 beta' and 1 omega subunit. When a sigma factor is associated with the core the holoenzyme is formed, which can initiate transcription.

The catalysed reaction is RNA(n) + a ribonucleoside 5'-triphosphate = RNA(n+1) + diphosphate. In terms of biological role, promotes RNA polymerase assembly. Latches the N- and C-terminal regions of the beta' subunit thereby facilitating its interaction with the beta and alpha subunits. This is DNA-directed RNA polymerase subunit omega from Nitratiruptor sp. (strain SB155-2).